Consider the following 436-residue polypeptide: GTPase Obg (436 aa).

An Obg domain is found at 2–160; that stretch reads SMFLDTAKIK…RELQLELKIL (159 aa). Residues 161–338 form the OBG-type G domain; the sequence is ADVGLVGFPS…LLDATAELLD (178 aa). Residues 167–174, 192–196, 214–217, 284–287, and 319–321 each bind GTP; these read GFPSVGKS, FTTIV, DLPG, NKMD, and SGL. Residues Ser174 and Thr194 each coordinate Mg(2+). The OCT domain maps to 358 to 436; sequence GFDEEEKAFE…IGKFEFEFVD (79 aa).

The protein belongs to the TRAFAC class OBG-HflX-like GTPase superfamily. OBG GTPase family. In terms of assembly, monomer. The cofactor is Mg(2+).

It is found in the cytoplasm. In terms of biological role, an essential GTPase which binds GTP, GDP and possibly (p)ppGpp with moderate affinity, with high nucleotide exchange rates and a fairly low GTP hydrolysis rate. Plays a role in control of the cell cycle, stress response, ribosome biogenesis and in those bacteria that undergo differentiation, in morphogenesis control. This Streptococcus pneumoniae serotype 2 (strain D39 / NCTC 7466) protein is GTPase Obg.